The sequence spans 551 residues: Probable alpha-glucosidase (551 aa).

Asp-212 serves as the catalytic Nucleophile. The active-site Proton donor is the Glu-272.

Belongs to the glycosyl hydrolase 13 family.

The enzyme catalyses Hydrolysis of terminal, non-reducing (1-&gt;4)-linked alpha-D-glucose residues with release of alpha-D-glucose.. This Rhizobium meliloti (strain 1021) (Ensifer meliloti) protein is Probable alpha-glucosidase (aglA).